Consider the following 963-residue polypeptide: Vacuolar membrane protease (963 aa).

Topologically, residues 1–15 (MVSSRRGFNPIAFTP) are cytoplasmic. Residues 16–36 (WPVTILTSLVYLALIIPIIVV) traverse the membrane as a helical segment. Over 37–391 (HHLVPPAPKQ…FQLNTLFGLS (355 aa)) the chain is Vacuolar. N-linked (GlcNAc...) asparagine glycosylation is found at Asn111 and Asn114. Residues His170 and Asp182 each coordinate Zn(2+). Catalysis depends on Glu216, which acts as the Proton acceptor. Zn(2+)-binding residues include Glu217, Glu242, and His315. A helical transmembrane segment spans residues 392-412 (VALLVVAPLLLILTSVALFAV). At 413–441 (DKMYMFSMYTYLSESGGQVSLYGLRGMFR) the chain is on the cytoplasmic side. A helical membrane pass occupies residues 442–462 (FPLILGISTALTVALAFLIMK). Residues 463 to 473 (VNPFIIYSSPY) are Vacuolar-facing. Residues 474–494 (AVWSMMLSTCMFFAWFISCVA) traverse the membrane as a helical segment. Topologically, residues 495–504 (DFARPSALHR) are cytoplasmic. The helical transmembrane segment at 505–525 (AYAFSWMFGILWVFLVIATVY) threads the bilayer. Residues 526-535 (QRQHGIASSY) are Vacuolar-facing. The helical transmembrane segment at 536-556 (FIVFYFAGVSVATWISYLELF) threads the bilayer. Over 557 to 668 (GLSTTQDYAR…WSIYLVSSAW (112 aa)) the chain is Cytoplasmic. Positions 569 to 618 (SRLSDRTPSSDSHLLAPSADELPSSGSVAGRDFNPEDVEDEEPTESTSLL) are disordered. Residues 603–612 (PEDVEDEEPT) are compositionally biased toward acidic residues. The helical transmembrane segment at 669–689 (ILQFLLVAPIVLILLGQLGLF) threads the bilayer. Residues 690 to 705 (LTSATYQIGADGGSQF) are Vacuolar-facing. Residues 706–726 (IIYIGIAVLSVLILLPLFPFI) traverse the membrane as a helical segment. Residues 727-732 (HRFTYH) lie on the Cytoplasmic side of the membrane. The chain crosses the membrane as a helical span at residues 733-753 (IPTFMLFVLIGTLVYNLTAFP). Over 754–963 (FSHNSRLKVA…LVEGSYSFKL (210 aa)) the chain is Vacuolar. Asn835 is a glycosylation site (N-linked (GlcNAc...) asparagine).

It belongs to the peptidase M28 family. It depends on Zn(2+) as a cofactor.

It is found in the vacuole membrane. Functionally, may be involved in vacuolar sorting and osmoregulation. In Arthroderma gypseum (strain ATCC MYA-4604 / CBS 118893) (Microsporum gypseum), this protein is Vacuolar membrane protease.